We begin with the raw amino-acid sequence, 204 residues long: Small ribosomal subunit protein uS4 (204 aa).

A disordered region spans residues Gly-21–Ser-45. The region spanning Arg-93–Val-156 is the S4 RNA-binding domain.

This sequence belongs to the universal ribosomal protein uS4 family. Part of the 30S ribosomal subunit. Contacts protein S5. The interaction surface between S4 and S5 is involved in control of translational fidelity.

In terms of biological role, one of the primary rRNA binding proteins, it binds directly to 16S rRNA where it nucleates assembly of the body of the 30S subunit. Functionally, with S5 and S12 plays an important role in translational accuracy. This chain is Small ribosomal subunit protein uS4, found in Acidiphilium cryptum (strain JF-5).